A 360-amino-acid polypeptide reads, in one-letter code: Inward rectifier potassium channel 13 (360 aa).

Over 1–50 (MDSRNCKVNAPLLSQRYRRMVTKDGHSTLQMDGAQRGLVYLRDAWGILMD) the chain is Cytoplasmic. A helical transmembrane segment spans residues 51 to 77 (MRWRWMMLVFSASFVVHWLVFAVLWYA). The Extracellular portion of the chain corresponds to 78-105 (VAEMNGDLEIDHDVPPENHTICVKHITS). Positions 106 to 122 (FTAAFSFSLETQLTIGY) form an intramembrane region, helical; Pore-forming. The short motif at 119 to 124 (TIGYGT) is the Selectivity filter element. Over 123-131 (GTMFPSGDC) the chain is Extracellular. The chain crosses the membrane as a helical span at residues 132–157 (PSAIALLAIQMLLGLMLEAFITGAFV). Topologically, residues 158–360 (AKIARPKNRA…FQIAETGLTE (203 aa)) are cytoplasmic. The residue at position 201 (S201) is a Phosphoserine; by PKC. S287 is subject to Phosphoserine; by PKA.

Belongs to the inward rectifier-type potassium channel (TC 1.A.2.1) family. KCNJ13 subfamily. As to quaternary structure, homotetramer. Interacts with RAB28; the interaction may facilitate cone outer segments phagocytosis. In terms of processing, phosphorylation at Ser-201 by PKC strongly inhibits ionic currents, while phosphorylation at Ser-287 by PKA increases them.

The protein resides in the membrane. The protein localises to the cell membrane. It carries out the reaction K(+)(in) = K(+)(out). With respect to regulation, inhibited by Ba(2+) and Cs(+), although sensitivity to those inhibitors is much lower than in other Kir channels. Its function is as follows. Inward rectifier potassium channels are characterized by a greater tendency to allow potassium to flow into the cell rather than out of it. Their voltage dependence is regulated by the concentration of extracellular potassium; as external potassium is raised, the voltage range of the channel opening shifts to more positive voltages. The inward rectification is mainly due to the blockage of outward current by internal magnesium. KCNJ13 has a very low single channel conductance, low sensitivity to block by external barium and cesium, and no dependence of its inward rectification properties on the internal blocking particle magnesium. In Rattus norvegicus (Rat), this protein is Inward rectifier potassium channel 13 (Kcnj13).